The chain runs to 211 residues: MRVRKRKGAEEHLENNPHYVISNPEEAKGRWHEIFGNNNPIHIEVGSGKGAFITGMAEQNPDINYIGIDIQLSVLSYALDKVLDSGAKNIKLLLVDGSSLSNYFDTGEVDLMYLNFSDPWPKKKHEKRRLTYKTFLDTYKDILPEQGEIHFKTDNRGLFEYSLASFSQYGMTLKQVWLDLHASDYQQNIMTEYERKFSNKGQVIYRVEARF.

Glu44, Asp69, Asp96, and Asp118 together coordinate S-adenosyl-L-methionine. Asp118 is an active-site residue. Residue Lys122 coordinates substrate. The tract at residues 124-129 (KHEKRR) is interaction with RNA. Substrate contacts are provided by residues Asp154 and 191 to 194 (TEYE).

Belongs to the class I-like SAM-binding methyltransferase superfamily. TrmB family.

The catalysed reaction is guanosine(46) in tRNA + S-adenosyl-L-methionine = N(7)-methylguanosine(46) in tRNA + S-adenosyl-L-homocysteine. It participates in tRNA modification; N(7)-methylguanine-tRNA biosynthesis. Catalyzes the formation of N(7)-methylguanine at position 46 (m7G46) in tRNA. The sequence is that of tRNA (guanine-N(7)-)-methyltransferase from Streptococcus agalactiae serotype Ia (strain ATCC 27591 / A909 / CDC SS700).